Reading from the N-terminus, the 124-residue chain is Large ribosomal subunit protein bL12 (124 aa).

This sequence belongs to the bacterial ribosomal protein bL12 family. As to quaternary structure, homodimer. Part of the ribosomal stalk of the 50S ribosomal subunit. Forms a multimeric L10(L12)X complex, where L10 forms an elongated spine to which 2 to 4 L12 dimers bind in a sequential fashion. Binds GTP-bound translation factors.

Forms part of the ribosomal stalk which helps the ribosome interact with GTP-bound translation factors. Is thus essential for accurate translation. This Chlorobium chlorochromatii (strain CaD3) protein is Large ribosomal subunit protein bL12.